The sequence spans 322 residues: HPr kinase/phosphorylase (322 aa).

Active-site residues include His146 and Lys167. 161–168 is an ATP binding site; that stretch reads GDSGLGKS. A Mg(2+)-binding site is contributed by Ser168. The active-site Proton acceptor; for phosphorylation activity. Proton donor; for dephosphorylation activity is Asp185. An important for the catalytic mechanism of both phosphorylation and dephosphorylation region spans residues 209 to 218; it reads LEVRGLGLLD. Glu210 is a Mg(2+) binding site. Arg250 is an active-site residue. The interval 271–276 is important for the catalytic mechanism of dephosphorylation; that stretch reads QVAAGR.

The protein belongs to the HPrK/P family. In terms of assembly, homohexamer. Mg(2+) is required as a cofactor.

The enzyme catalyses [HPr protein]-L-serine + ATP = [HPr protein]-O-phospho-L-serine + ADP + H(+). It catalyses the reaction [HPr protein]-O-phospho-L-serine + phosphate + H(+) = [HPr protein]-L-serine + diphosphate. Functionally, catalyzes the ATP- as well as the pyrophosphate-dependent phosphorylation of a specific serine residue in HPr, a phosphocarrier protein of the phosphoenolpyruvate-dependent sugar phosphotransferase system (PTS). HprK/P also catalyzes the pyrophosphate-producing, inorganic phosphate-dependent dephosphorylation (phosphorolysis) of seryl-phosphorylated HPr (P-Ser-HPr). This Paraburkholderia phytofirmans (strain DSM 17436 / LMG 22146 / PsJN) (Burkholderia phytofirmans) protein is HPr kinase/phosphorylase.